The primary structure comprises 208 residues: Uracil phosphoribosyltransferase (208 aa).

Residues Arg78, Arg103, and 130-138 (DPMLATGGS) contribute to the 5-phospho-alpha-D-ribose 1-diphosphate site. Uracil-binding positions include Ile193 and 198–200 (GDA). Asp199 is a 5-phospho-alpha-D-ribose 1-diphosphate binding site.

The protein belongs to the UPRTase family. Requires Mg(2+) as cofactor.

It carries out the reaction UMP + diphosphate = 5-phospho-alpha-D-ribose 1-diphosphate + uracil. The protein operates within pyrimidine metabolism; UMP biosynthesis via salvage pathway; UMP from uracil: step 1/1. With respect to regulation, allosterically activated by GTP. Catalyzes the conversion of uracil and 5-phospho-alpha-D-ribose 1-diphosphate (PRPP) to UMP and diphosphate. The chain is Uracil phosphoribosyltransferase from Neisseria gonorrhoeae (strain ATCC 700825 / FA 1090).